The primary structure comprises 656 residues: ATP-dependent zinc metalloprotease FtsH (656 aa).

Residues 1-45 lie on the Cytoplasmic side of the membrane; sequence MAIFARRIGLNQHSAYGSRQRVIVMKNFGKKALIKQQSPKRVAWT. The helical transmembrane segment at 46–66 threads the bilayer; the sequence is GALAASLIMLPTMFGGNPVLA. Residues 67-147 lie on the Lumenal side of the membrane; it reads QKAERESLSY…EISSANSRAA (81 aa). The helical transmembrane segment at 148–168 threads the bilayer; it reads VGLLINLMWILPLVALMLLFL. Over 169–656 the chain is Cytoplasmic; that stretch reads RRSTNASSQA…DEQLSMVNSQ (488 aa). 239-246 is a binding site for ATP; that stretch reads GPPGTGKT. Position 460 (histidine 460) interacts with Zn(2+). Glutamate 461 is an active-site residue. Residues histidine 464 and aspartate 538 each contribute to the Zn(2+) site.

It in the central section; belongs to the AAA ATPase family. The protein in the C-terminal section; belongs to the peptidase M41 family. Homohexamer. The cofactor is Zn(2+).

Its subcellular location is the cellular thylakoid membrane. Functionally, acts as a processive, ATP-dependent zinc metallopeptidase for both cytoplasmic and membrane proteins. Plays a role in the quality control of integral membrane proteins. This Nostoc sp. (strain PCC 7120 / SAG 25.82 / UTEX 2576) protein is ATP-dependent zinc metalloprotease FtsH.